The primary structure comprises 68 residues: Pleurocidin (68 aa).

An N-terminal signal peptide occupies residues 1 to 22; sequence MKFTATFLMMAIFVLMVEPGEC. Residues 48–68 constitute a propeptide that is removed on maturation; that stretch reads GDKQELNKRAVDEDPNVIVFE.

The protein belongs to the pleurocidin family. As to expression, goblet cells.

It localises to the secreted. Its subcellular location is the membrane. Antimicrobial peptide with potent activity against Gram-positive and Gram-negative bacteria. Activity against E.coli and B.subtilis. Weaker activity against L.mucor, s.marcescens and P.aeruginosa. May play a role in innate host defense. This Pseudopleuronectes americanus (Winter flounder) protein is Pleurocidin (ple1).